The chain runs to 93 residues: N-acetyl-S-hydroxy-L-cysteine reductase (93 aa).

Positions 1–93 (MSDVVNIVVW…NHAQIKEAKR (93 aa)) constitute a Glutaredoxin domain. Residues Cys-15 and Cys-18 are joined by a disulfide bond.

Belongs to the glutaredoxin family.

It catalyses the reaction N-acetyl-S-hydroxy-L-cysteine + AH2 = N-acetyl-L-cysteine + A + H2O. It functions in the pathway amino-acid metabolism. Its function is as follows. Involved in a cysteine salvage pathway from S-alkylcysteine. Catalyzes the reduction of N-acetyl-S-hydroxy-L-cysteine (N-acetyl-L-cysteine sulfenic acid) to N-acetyl-L-cysteine. This pathway is likely important in the catabolism of alkylated cysteine generated by proteolysis of alkylated glutathione formed in the detoxification of a wide range of electrophiles. The protein is N-acetyl-S-hydroxy-L-cysteine reductase of Bacillus subtilis (strain 168).